The primary structure comprises 250 residues: Small ribosomal subunit protein uS2 (250 aa).

Belongs to the universal ribosomal protein uS2 family.

This is Small ribosomal subunit protein uS2 from Paraburkholderia phytofirmans (strain DSM 17436 / LMG 22146 / PsJN) (Burkholderia phytofirmans).